The primary structure comprises 424 residues: Magnesium-chelatase subunit ChlI-1, chloroplastic (424 aa).

The N-terminal 60 residues, 1-60 (MASLLGTSSSAIWASPSLSSPSSKPSSSPICFRPGKLFGSKLNAGIQIRPKKNRSRYHVS), are a transit peptide targeting the chloroplast. Val61 carries the post-translational modification N-acetylvaline. Disulfide bonds link Cys102–Cys193 and Cys354–Cys396. Residue 119–126 (GDRGTGKS) coordinates ATP. A Phosphoserine modification is found at Ser355.

This sequence belongs to the Mg-chelatase subunits D/I family. The magnesium chelatase complex is a heterotrimer consisting of subunits CHLI, CHLD and CHLH. Interacts with CHLH and CHLD.

Its subcellular location is the plastid. It localises to the chloroplast. The catalysed reaction is protoporphyrin IX + Mg(2+) + ATP + H2O = Mg-protoporphyrin IX + ADP + phosphate + 3 H(+). It participates in porphyrin-containing compound metabolism; chlorophyll biosynthesis. With respect to regulation, redox regulation; active in reducing conditions, inactive in oxidizing conditions. Thioredoxins f and m mediate the reversible reductive activation of oxidized CHLI1. In terms of biological role, involved in chlorophyll biosynthesis. Catalyzes the insertion of magnesium ion into protoporphyrin IX to yield Mg-protoporphyrin IX. The magnesium-chelatase is a complex of three subunits, CHLI, CHLD and CHLH. The reaction takes place in two steps, with an ATP-dependent activation followed by an ATP-dependent chelation step. Possesses high affinity for ATP and may play a major role in chlorophyll biosynthesis. Does not bind abscisic acid (ABA), but is a positive regulator of ABA signaling. May be involved in ABA signaling in the control of stomatal aperture, but does not seem to have an effect on ABA-induced gene expression. This is Magnesium-chelatase subunit ChlI-1, chloroplastic (CHLI1) from Arabidopsis thaliana (Mouse-ear cress).